We begin with the raw amino-acid sequence, 1106 residues long: Putative pre-mRNA-splicing factor ATP-dependent RNA helicase DHX16 (1106 aa).

3 disordered regions span residues 73–100 (KIQN…DKEK), 120–286 (DDIV…TKSR), and 366–394 (YIND…WEQN). Low complexity predominate over residues 78 to 94 (TSSSSSSSSTSLSSSSS). Residues 138–155 (KRKKKEKKKEKKDKKDKK) show a composition bias toward basic residues. The segment covering 156–167 (DKKSSTRKKSDN) has biased composition (basic and acidic residues). Residues 189-201 (NNENNDNNNDNNN) show a composition bias toward low complexity. Residues 232-283 (REQREVKELSDRIKKRDEKSTKKKIVDDSETKESIERKNRLEQNEQLETERT) are compositionally biased toward basic and acidic residues. The Helicase ATP-binding domain maps to 477 to 640 (IDAVREYQVL…FDGAPTFNIP (164 aa)). 490–497 (GETGSGKT) contacts ATP. The DEAH box signature appears at 587–590 (DEAH). The 174-residue stretch at 665–838 (TVLQIHITEP…NVVLLLKSMG (174 aa)) folds into the Helicase C-terminal domain.

It belongs to the DEAD box helicase family. DEAH subfamily. DDX16/PRP8 sub-subfamily. Component of pre-catalytic spliceosome complexes.

The protein resides in the nucleus. The protein localises to the nucleoplasm. It catalyses the reaction ATP + H2O = ADP + phosphate + H(+). Its function is as follows. Required for pre-mRNA splicing as component of the spliceosome. Contributes to pre-mRNA splicing after spliceosome formation and prior to the first transesterification reaction. The chain is Putative pre-mRNA-splicing factor ATP-dependent RNA helicase DHX16 (dhx16) from Dictyostelium discoideum (Social amoeba).